A 140-amino-acid polypeptide reads, in one-letter code: Transmembrane protein 107 (140 aa).

The next 2 helical transmembrane spans lie at 7 to 27 (LVPS…TIFW) and 53 to 73 (LIIA…GFLS). A glycan (N-linked (GlcNAc...) asparagine) is linked at Asn79. Helical transmembrane passes span 84 to 104 (LLSV…LFEG) and 113 to 133 (IMSF…IAVF).

Its subcellular location is the membrane. May play a role in cilia formation and embryonic patterning. The sequence is that of Transmembrane protein 107 (tmem107) from Xenopus laevis (African clawed frog).